A 235-amino-acid polypeptide reads, in one-letter code: Small ribosomal subunit protein uS2 (235 aa).

The protein belongs to the universal ribosomal protein uS2 family.

The sequence is that of Small ribosomal subunit protein uS2 from Geobacillus thermodenitrificans (strain NG80-2).